The following is a 429-amino-acid chain: 3-phosphoshikimate 1-carboxyvinyltransferase (429 aa).

3-phosphoshikimate-binding residues include lysine 23, serine 24, and arginine 28. Phosphoenolpyruvate is bound at residue lysine 23. Phosphoenolpyruvate contacts are provided by glycine 95 and arginine 123. Residues serine 168, glutamine 170, aspartate 316, and lysine 343 each coordinate 3-phosphoshikimate. Phosphoenolpyruvate is bound at residue glutamine 170. Aspartate 316 acts as the Proton acceptor in catalysis. 2 residues coordinate phosphoenolpyruvate: arginine 347 and arginine 389.

It belongs to the EPSP synthase family. Monomer.

Its subcellular location is the cytoplasm. The enzyme catalyses 3-phosphoshikimate + phosphoenolpyruvate = 5-O-(1-carboxyvinyl)-3-phosphoshikimate + phosphate. It participates in metabolic intermediate biosynthesis; chorismate biosynthesis; chorismate from D-erythrose 4-phosphate and phosphoenolpyruvate: step 6/7. Its function is as follows. Catalyzes the transfer of the enolpyruvyl moiety of phosphoenolpyruvate (PEP) to the 5-hydroxyl of shikimate-3-phosphate (S3P) to produce enolpyruvyl shikimate-3-phosphate and inorganic phosphate. The protein is 3-phosphoshikimate 1-carboxyvinyltransferase of Bacillus thuringiensis (strain Al Hakam).